A 244-amino-acid chain; its full sequence is Serine-rich single-pass membrane protein 1 (244 aa).

A helical transmembrane segment spans residues 35-55 (CGTIGNFLLWYFVIVFVLMFF). Disordered stretches follow at residues 65–112 (DKKD…LTPV), 132–191 (QSQF…LGSY), and 213–244 (HSQQKASVTPPMKGDSPEESSISDINTKFSKF). Basic and acidic residues predominate over residues 80-94 (ASKETSYKWQSKDGA). Composition is skewed to polar residues over residues 97–112 (PSQTMKKPKQNQLTPV) and 132–142 (QSQFNEVNQNQ). Residues 161–176 (SWKESESEHHPSPDSI) are compositionally biased toward basic and acidic residues. A compositionally biased stretch (polar residues) spans 231-244 (ESSISDINTKFSKF).

The protein localises to the membrane. This Macaca fascicularis (Crab-eating macaque) protein is Serine-rich single-pass membrane protein 1 (SSMEM1).